The chain runs to 375 residues: Lipid droplet hydrolase 1 (375 aa).

The AB hydrolase-1 domain maps to 88-358 (VFVFVPGLAG…CSHNLCFDRP (271 aa)). Catalysis depends on S177, which acts as the Charge relay system. Residues 373-375 (SKL) carry the Microbody targeting signal motif.

This sequence belongs to the AB hydrolase superfamily. Lipase family.

It localises to the lipid droplet. It carries out the reaction a triacylglycerol + H2O = a diacylglycerol + a fatty acid + H(+). In terms of biological role, serine hydrolase required for the maintenance of steady state level of non-polar and polar lipids of lipid droplets and thus plays a role in maintaining the lipids homeostasis. Exhibits both esterase and triacylglycerol lipase activity. This chain is Lipid droplet hydrolase 1, found in Saccharomyces cerevisiae (strain ATCC 204508 / S288c) (Baker's yeast).